The following is a 121-amino-acid chain: Large ribosomal subunit protein bL12 (121 aa).

It belongs to the bacterial ribosomal protein bL12 family. Homodimer. Part of the ribosomal stalk of the 50S ribosomal subunit. Forms a multimeric L10(L12)X complex, where L10 forms an elongated spine to which 2 to 4 L12 dimers bind in a sequential fashion. Binds GTP-bound translation factors.

Forms part of the ribosomal stalk which helps the ribosome interact with GTP-bound translation factors. Is thus essential for accurate translation. This is Large ribosomal subunit protein bL12 from Lactococcus lactis subsp. cremoris (strain MG1363).